The primary structure comprises 201 residues: Probable molybdenum cofactor guanylyltransferase (201 aa).

Residues 16–18, K28, D75, and D107 contribute to the GTP site; that span reads LAG. Position 107 (D107) interacts with Mg(2+).

The protein belongs to the MobA family. Mg(2+) is required as a cofactor.

The protein resides in the cytoplasm. It catalyses the reaction Mo-molybdopterin + GTP + H(+) = Mo-molybdopterin guanine dinucleotide + diphosphate. Transfers a GMP moiety from GTP to Mo-molybdopterin (Mo-MPT) cofactor (Moco or molybdenum cofactor) to form Mo-molybdopterin guanine dinucleotide (Mo-MGD) cofactor. This chain is Probable molybdenum cofactor guanylyltransferase, found in Mycobacterium bovis (strain ATCC BAA-935 / AF2122/97).